We begin with the raw amino-acid sequence, 378 residues long: Alanine racemase (378 aa).

The Proton acceptor; specific for D-alanine role is filled by Lys40. The residue at position 40 (Lys40) is an N6-(pyridoxal phosphate)lysine. Arg140 provides a ligand contact to substrate. Tyr270 acts as the Proton acceptor; specific for L-alanine in catalysis. Met317 contributes to the substrate binding site.

Belongs to the alanine racemase family. Pyridoxal 5'-phosphate is required as a cofactor.

The catalysed reaction is L-alanine = D-alanine. It participates in amino-acid biosynthesis; D-alanine biosynthesis; D-alanine from L-alanine: step 1/1. In terms of biological role, catalyzes the interconversion of L-alanine and D-alanine. May also act on other amino acids. In Lacticaseibacillus casei (strain BL23) (Lactobacillus casei), this protein is Alanine racemase (alr).